The primary structure comprises 179 residues: Repressor of phase 1 flagellin gene (179 aa).

Functionally, transcriptional repressor of the FliC phase-1 flagellin. The polypeptide is Repressor of phase 1 flagellin gene (fljA) (Salmonella typhimurium (strain LT2 / SGSC1412 / ATCC 700720)).